The sequence spans 193 residues: Ion-translocating oxidoreductase complex subunit A (193 aa).

Transmembrane regions (helical) follow at residues 5-25 (LLLFVGTVLVNNFVLVKFLGL), 47-67 (FVMTLASICAWLIDTWILIPL), 72-92 (LRTLSFILVIAVVVQFTEMVV), 102-122 (LLGIFLPLITTNCAVLGVALL), 134-154 (ALYGFSAAVGFSLVMVLFAAI), and 171-191 (AIALITAGLMSLAFMGFSGLV).

It belongs to the NqrDE/RnfAE family. The complex is composed of six subunits: RsxA, RsxB, RsxC, RsxD, RsxE and RsxG.

Its subcellular location is the cell inner membrane. Functionally, part of a membrane-bound complex that couples electron transfer with translocation of ions across the membrane. Required to maintain the reduced state of SoxR. In Salmonella arizonae (strain ATCC BAA-731 / CDC346-86 / RSK2980), this protein is Ion-translocating oxidoreductase complex subunit A.